The sequence spans 309 residues: uncharacterized protein (309 aa).

The protein to S.pombe SpAC14C4.04.

This is an uncharacterized protein from Schizosaccharomyces pombe (strain 972 / ATCC 24843) (Fission yeast).